The following is a 329-amino-acid chain: GTP 3',8-cyclase (329 aa).

One can recognise a Radical SAM core domain in the interval 8 to 234; the sequence is AFARKFYYLR…QLRQRSDGPA (227 aa). A GTP-binding site is contributed by R17. The [4Fe-4S] cluster site is built by C24 and C28. Y30 serves as a coordination point for S-adenosyl-L-methionine. C31 is a [4Fe-4S] cluster binding site. Residue R68 participates in GTP binding. G72 provides a ligand contact to S-adenosyl-L-methionine. T99 is a GTP binding site. S123 contacts S-adenosyl-L-methionine. K160 is a binding site for GTP. Residue M194 participates in S-adenosyl-L-methionine binding. Residues C257 and C260 each contribute to the [4Fe-4S] cluster site. Residue 262–264 coordinates GTP; that stretch reads RLR. C274 contributes to the [4Fe-4S] cluster binding site.

This sequence belongs to the radical SAM superfamily. MoaA family. In terms of assembly, monomer and homodimer. The cofactor is [4Fe-4S] cluster.

The enzyme catalyses GTP + AH2 + S-adenosyl-L-methionine = (8S)-3',8-cyclo-7,8-dihydroguanosine 5'-triphosphate + 5'-deoxyadenosine + L-methionine + A + H(+). The protein operates within cofactor biosynthesis; molybdopterin biosynthesis. Catalyzes the cyclization of GTP to (8S)-3',8-cyclo-7,8-dihydroguanosine 5'-triphosphate. This chain is GTP 3',8-cyclase, found in Shigella dysenteriae serotype 1 (strain Sd197).